A 279-amino-acid chain; its full sequence is Prohibitin-4, mitochondrial (279 aa).

Position 2 is an N-acetylglycine (Gly-2). The Mitochondrial matrix portion of the chain corresponds to 2-6 (GSQQV). Residues 7-28 (AISFLTNLAKAAFGLGVAATAL) form a helical; Signal-anchor for type II membrane protein membrane-spanning segment. Residues 29 to 279 (NSSLYTVDGG…SMLFNLNPGR (251 aa)) lie on the Mitochondrial intermembrane side of the membrane.

It belongs to the prohibitin family. As to quaternary structure, component of a prohibitin multimeric complex in mitochondrial membranes. In terms of tissue distribution, mostly expressed in proliferative tissues, including vasculature, shoot and root apical tissues. Accumulates in dry seeds.

Its subcellular location is the mitochondrion inner membrane. Prohibitin probably acts as a holdase/unfoldase for the stabilization of newly synthesized mitochondrial proteins. This is Prohibitin-4, mitochondrial (PHB4) from Arabidopsis thaliana (Mouse-ear cress).